The following is a 184-amino-acid chain: UPF0149 protein PSPTO_5224 (184 aa).

The protein belongs to the UPF0149 family.

The polypeptide is UPF0149 protein PSPTO_5224 (Pseudomonas syringae pv. tomato (strain ATCC BAA-871 / DC3000)).